A 68-amino-acid polypeptide reads, in one-letter code: Conotoxin Cal14.13a (68 aa).

Positions 1 to 21 are cleaved as a signal peptide; the sequence is MKLCVVIVLLMLAMPFNGGEA. A propeptide spanning residues 22-38 is cleaved from the precursor; the sequence is SRFFNQHARSQRSGMKT. Residue V66 is modified to Valine amide.

Post-translationally, contains 2 disulfide bonds. In terms of tissue distribution, expressed by the venom duct.

The protein resides in the secreted. Functionally, probable neurotoxin with unknown target. Possibly targets ion channels. This Californiconus californicus (California cone) protein is Conotoxin Cal14.13a.